Reading from the N-terminus, the 506-residue chain is Maturase K (506 aa).

This sequence belongs to the intron maturase 2 family. MatK subfamily.

The protein resides in the plastid. It is found in the chloroplast. Functionally, usually encoded in the trnK tRNA gene intron. Probably assists in splicing its own and other chloroplast group II introns. This is Maturase K from Trifolium striatum (Knotted clover).